Consider the following 96-residue polypeptide: MPRPRKCRRLSACVPCSMFKPNGIPSVELTKIQLEADEFEALNLGDVEKMSQLDAAARMGISRQTFGNLLASARKKVATAITRGHALVLPQERQES.

This sequence belongs to the UPF0251 family.

This is UPF0251 protein Ssed_3913 from Shewanella sediminis (strain HAW-EB3).